Here is a 292-residue protein sequence, read N- to C-terminus: Proteasome subunit beta 2 (292 aa).

Positions 1–59 (MTVDRAPRITDGDTRLSFGSNLSSFSEYLRVHAPEHLPQNRFADTGGVVMGGGDVAPHG) are cleaved as a propeptide — removed in mature form; by autocatalysis. T60 acts as the Nucleophile in catalysis.

This sequence belongs to the peptidase T1B family. In terms of assembly, the 20S proteasome core is composed of 14 alpha and 14 beta subunits that assemble into four stacked heptameric rings, resulting in a barrel-shaped structure. The two inner rings, each composed of seven catalytic beta subunits, are sandwiched by two outer rings, each composed of seven alpha subunits. All four combinations of alpha- and beta-subunits (beta2-alpha1, beta2-alpha2, beta1-alpha2 and beta1-alpha1) yield fully assembled and proteolytically active proteasomes. The catalytic chamber with the active sites is on the inside of the barrel. Has probably a gated structure, the ends of the cylinder being occluded by the N-termini of the alpha-subunits. Is likely capped by the proteasome-associated ATPase, ARC.

The protein resides in the cytoplasm. The enzyme catalyses Cleavage of peptide bonds with very broad specificity.. The protein operates within protein degradation; proteasomal Pup-dependent pathway. The formation of the proteasomal ATPase ARC-20S proteasome complex, likely via the docking of the C-termini of ARC into the intersubunit pockets in the alpha-rings, may trigger opening of the gate for substrate entry. Interconversion between the open-gate and close-gate conformations leads to a dynamic regulation of the 20S proteasome proteolysis activity. In terms of biological role, component of the proteasome core, a large protease complex with broad specificity involved in protein degradation. The R.erythropolis proteasomes are able to cleave oligopeptides after Tyr, Phe and Leu, very poorly after Arg but not after Glu. Thus, displays chymotrypsin-like activity, low trypsin-like activity but no caspase-like activity. The protein is Proteasome subunit beta 2 of Rhodococcus erythropolis (Arthrobacter picolinophilus).